Here is a 388-residue protein sequence, read N- to C-terminus: Chorismate synthase (388 aa).

Positions 39 and 45 each coordinate NADP(+). FMN contacts are provided by residues 130 to 132, 251 to 252, Gly-296, 311 to 315, and Arg-337; these read RSS, NA, and KPIPT.

Belongs to the chorismate synthase family. Homotetramer. FMNH2 serves as cofactor.

It carries out the reaction 5-O-(1-carboxyvinyl)-3-phosphoshikimate = chorismate + phosphate. It participates in metabolic intermediate biosynthesis; chorismate biosynthesis; chorismate from D-erythrose 4-phosphate and phosphoenolpyruvate: step 7/7. Catalyzes the anti-1,4-elimination of the C-3 phosphate and the C-6 proR hydrogen from 5-enolpyruvylshikimate-3-phosphate (EPSP) to yield chorismate, which is the branch point compound that serves as the starting substrate for the three terminal pathways of aromatic amino acid biosynthesis. This reaction introduces a second double bond into the aromatic ring system. The protein is Chorismate synthase of Streptococcus pyogenes serotype M12 (strain MGAS2096).